Consider the following 460-residue polypeptide: ATP synthase subunit beta (460 aa).

150 to 157 (GGAGVGKT) is an ATP binding site.

It belongs to the ATPase alpha/beta chains family. In terms of assembly, F-type ATPases have 2 components, CF(1) - the catalytic core - and CF(0) - the membrane proton channel. CF(1) has five subunits: alpha(3), beta(3), gamma(1), delta(1), epsilon(1). CF(0) has three main subunits: a(1), b(2) and c(9-12). The alpha and beta chains form an alternating ring which encloses part of the gamma chain. CF(1) is attached to CF(0) by a central stalk formed by the gamma and epsilon chains, while a peripheral stalk is formed by the delta and b chains.

It is found in the cell inner membrane. The enzyme catalyses ATP + H2O + 4 H(+)(in) = ADP + phosphate + 5 H(+)(out). Functionally, produces ATP from ADP in the presence of a proton gradient across the membrane. The catalytic sites are hosted primarily by the beta subunits. This is ATP synthase subunit beta from Citrobacter koseri (strain ATCC BAA-895 / CDC 4225-83 / SGSC4696).